A 388-amino-acid chain; its full sequence is Cell adhesion molecule 4 (388 aa).

The first 20 residues, 1–20 (MGRARRFQWPLLLLWAAAAG), serve as a signal peptide directing secretion. The 99-residue stretch at 21-119 (PGTAQEVQTE…DTHHQIATLT (99 aa)) folds into the Ig-like V-type domain. Residues 25–324 (QEVQTENVTV…VEAQTSVPYA (300 aa)) lie on the Extracellular side of the membrane. Residues Asn-31 and Asn-67 are each glycosylated (N-linked (GlcNAc...) asparagine). Cystine bridges form between Cys-44/Cys-104, Cys-145/Cys-199, and Cys-245/Cys-291. Ig-like C2-type domains follow at residues 124–219 (PENP…YVLD) and 224–307 (PTAR…YVLV). Asn-286 is a glycosylation site (N-linked (GlcNAc...) asparagine). Residues 325 to 345 (IVGGILALLVFLIICVLVGMV) traverse the membrane as a helical segment. Over 346–388 (WCSVRQKGSYLTHEASGLDEQGEAREAFLNGSDGHKRKEEFFI) the chain is Cytoplasmic. Residue Ser-361 is modified to Phosphoserine.

The protein belongs to the nectin family. In terms of assembly, monomer and homodimer. In terms of processing, N-glycosylated.

The protein resides in the membrane. Involved in the cell-cell adhesion. Has calcium- and magnesium-independent cell-cell adhesion activity. May have tumor-suppressor activity. This Rattus norvegicus (Rat) protein is Cell adhesion molecule 4 (Cadm4).